The sequence spans 286 residues: ATP synthase gamma chain (286 aa).

Belongs to the ATPase gamma chain family. As to quaternary structure, F-type ATPases have 2 components, CF(1) - the catalytic core - and CF(0) - the membrane proton channel. CF(1) has five subunits: alpha(3), beta(3), gamma(1), delta(1), epsilon(1). CF(0) has three main subunits: a, b and c.

It is found in the cell inner membrane. Functionally, produces ATP from ADP in the presence of a proton gradient across the membrane. The gamma chain is believed to be important in regulating ATPase activity and the flow of protons through the CF(0) complex. In Pseudomonas fluorescens (strain SBW25), this protein is ATP synthase gamma chain.